A 249-amino-acid chain; its full sequence is 5'-nucleotidase SurE (249 aa).

Residues Asp-8, Asp-9, Ser-39, and Asn-91 each coordinate a divalent metal cation.

It belongs to the SurE nucleotidase family. The cofactor is a divalent metal cation.

It localises to the cytoplasm. It catalyses the reaction a ribonucleoside 5'-phosphate + H2O = a ribonucleoside + phosphate. Functionally, nucleotidase that shows phosphatase activity on nucleoside 5'-monophosphates. This chain is 5'-nucleotidase SurE, found in Pseudomonas putida (strain ATCC 47054 / DSM 6125 / CFBP 8728 / NCIMB 11950 / KT2440).